A 437-amino-acid chain; its full sequence is Phosphoglucosamine mutase (437 aa).

The Phosphoserine intermediate role is filled by S101. S101, D234, D236, and D238 together coordinate Mg(2+). S101 is subject to Phosphoserine.

This sequence belongs to the phosphohexose mutase family. Requires Mg(2+) as cofactor. Post-translationally, activated by phosphorylation.

The enzyme catalyses alpha-D-glucosamine 1-phosphate = D-glucosamine 6-phosphate. In terms of biological role, catalyzes the conversion of glucosamine-6-phosphate to glucosamine-1-phosphate. This chain is Phosphoglucosamine mutase, found in Thermus thermophilus (strain ATCC 27634 / DSM 579 / HB8).